We begin with the raw amino-acid sequence, 122 residues long: Large ribosomal subunit protein uL14 (122 aa).

It belongs to the universal ribosomal protein uL14 family. Part of the 50S ribosomal subunit. Forms a cluster with proteins L3 and L19. In the 70S ribosome, L14 and L19 interact and together make contacts with the 16S rRNA in bridges B5 and B8.

Its function is as follows. Binds to 23S rRNA. Forms part of two intersubunit bridges in the 70S ribosome. This is Large ribosomal subunit protein uL14 from Mycobacteroides abscessus (strain ATCC 19977 / DSM 44196 / CCUG 20993 / CIP 104536 / JCM 13569 / NCTC 13031 / TMC 1543 / L948) (Mycobacterium abscessus).